Reading from the N-terminus, the 545-residue chain is Chaperonin GroEL 2 (545 aa).

ATP contacts are provided by residues 30-33 (TLGP), Lys-51, 87-91 (DGTTT), Gly-415, and Asp-494. The disordered stretch occupies residues 526-545 (EKGAGMPGMPPGGGYPGMGM). Positions 536-545 (PGGGYPGMGM) are enriched in gly residues.

The protein belongs to the chaperonin (HSP60) family. As to quaternary structure, forms a cylinder of 14 subunits composed of two heptameric rings stacked back-to-back. Interacts with the co-chaperonin GroES.

The protein resides in the cytoplasm. The catalysed reaction is ATP + H2O + a folded polypeptide = ADP + phosphate + an unfolded polypeptide.. Together with its co-chaperonin GroES, plays an essential role in assisting protein folding. The GroEL-GroES system forms a nano-cage that allows encapsulation of the non-native substrate proteins and provides a physical environment optimized to promote and accelerate protein folding. The sequence is that of Chaperonin GroEL 2 from Syntrophus aciditrophicus (strain SB).